Consider the following 583-residue polypeptide: Protein LONG AFTER FAR-RED 3 (583 aa).

A helical transmembrane segment spans residues F7 to L27. N-linked (GlcNAc...) asparagine glycans are attached at residues N55 and N374.

This sequence belongs to the metallo-dependent hydrolases superfamily. In terms of tissue distribution, expressed at low level in seedlings, roots, leaves, stems, flowers, and siliques.

It is found in the membrane. The protein localises to the cytoplasm. Its subcellular location is the perinuclear region. In terms of biological role, required for phyA-controlled responses to continuous far-red light (FRc) conditions, including the inhibition of hypocotyl elongation and the regulation of XTH15/XTR7 expression. This Arabidopsis thaliana (Mouse-ear cress) protein is Protein LONG AFTER FAR-RED 3.